Here is a 242-residue protein sequence, read N- to C-terminus: ATP-dependent dethiobiotin synthetase BioD (242 aa).

ATP is bound at residue 12–17; the sequence is EVGKTV. Thr-16 serves as a coordination point for Mg(2+). Lys-37 is a catalytic residue. Position 41 (Ser-41) interacts with substrate. Residues Asp-51 and 112–115 contribute to the ATP site; that span reads EGAG. Mg(2+)-binding residues include Asp-51 and Glu-112.

The protein belongs to the dethiobiotin synthetase family. Homodimer. The cofactor is Mg(2+).

The protein localises to the cytoplasm. It carries out the reaction (7R,8S)-7,8-diammoniononanoate + CO2 + ATP = (4R,5S)-dethiobiotin + ADP + phosphate + 3 H(+). It functions in the pathway cofactor biosynthesis; biotin biosynthesis; biotin from 7,8-diaminononanoate: step 1/2. Its function is as follows. Catalyzes a mechanistically unusual reaction, the ATP-dependent insertion of CO2 between the N7 and N8 nitrogen atoms of 7,8-diaminopelargonic acid (DAPA, also called 7,8-diammoniononanoate) to form a ureido ring. The polypeptide is ATP-dependent dethiobiotin synthetase BioD (Bacillus cereus (strain ATCC 14579 / DSM 31 / CCUG 7414 / JCM 2152 / NBRC 15305 / NCIMB 9373 / NCTC 2599 / NRRL B-3711)).